A 155-amino-acid polypeptide reads, in one-letter code: 6,7-dimethyl-8-ribityllumazine synthase (155 aa).

5-amino-6-(D-ribitylamino)uracil contacts are provided by residues F24, 58 to 60, and 82 to 84; these read AFE and AVI. 87–88 is a (2S)-2-hydroxy-3-oxobutyl phosphate binding site; the sequence is ST. The active-site Proton donor is the H90. A 5-amino-6-(D-ribitylamino)uracil-binding site is contributed by F115. A (2S)-2-hydroxy-3-oxobutyl phosphate-binding site is contributed by R129.

This sequence belongs to the DMRL synthase family.

The catalysed reaction is (2S)-2-hydroxy-3-oxobutyl phosphate + 5-amino-6-(D-ribitylamino)uracil = 6,7-dimethyl-8-(1-D-ribityl)lumazine + phosphate + 2 H2O + H(+). Its pathway is cofactor biosynthesis; riboflavin biosynthesis; riboflavin from 2-hydroxy-3-oxobutyl phosphate and 5-amino-6-(D-ribitylamino)uracil: step 1/2. Catalyzes the formation of 6,7-dimethyl-8-ribityllumazine by condensation of 5-amino-6-(D-ribitylamino)uracil with 3,4-dihydroxy-2-butanone 4-phosphate. This is the penultimate step in the biosynthesis of riboflavin. This is 6,7-dimethyl-8-ribityllumazine synthase from Acetivibrio thermocellus (strain ATCC 27405 / DSM 1237 / JCM 9322 / NBRC 103400 / NCIMB 10682 / NRRL B-4536 / VPI 7372) (Clostridium thermocellum).